The chain runs to 159 residues: Flagellar assembly factor FliW (159 aa).

This sequence belongs to the FliW family. Interacts with translational regulator CsrA and flagellin(s).

The protein localises to the cytoplasm. In terms of biological role, acts as an anti-CsrA protein, binds CsrA and prevents it from repressing translation of its target genes, one of which is flagellin. Binds to flagellin and participates in the assembly of the flagellum. This Geobacter sulfurreducens (strain ATCC 51573 / DSM 12127 / PCA) protein is Flagellar assembly factor FliW.